A 1319-amino-acid chain; its full sequence is MKEKHENWSHPLAFWLCDCAAIIPNPATQNFAKNDFLDGLLMLNLMKFINPHFSENEKNGQSLYEELLNQISQFYEKNLDQVIVCKMPEISILESSGEIDEITFEELKKLLLLLLGCAIQSDHKKVFVDRITGFDQTIQAELAACIQKLTESDEIVQNLEDFERRKMKETDEVGGGGGSIEDVDSDDMESSTTSSSNGEIAIKQQDQSFLMSRSTSPTSELRHQTLQIANLQHEMRQMRTQAENRDEECQKLELDNEEKAQKIKILENERLKLVDFKKKWKSVNDDLQEANCKIEKLQNLVGIEKKYREARDGKELYKSKYDIVVKKNLEMEETITTLEKNLKTLQMEMKEKFGVEDNLQRMRNTIDDLEAEISKKNLEIEDFLDEKHRMDREIKELKEIVHQMEVPSTTTTPRIMDSLADQLENAKQDEFEMMKAEIRKLRAQTEGATPETTIIQCNQDLDTLRSQLSTEQHQTAQLHLEIQKMQVEKEQIDGNMERIGIELEEMSAQVENLNLERDEAVKQLLEARRKFGEFQMGQSRDLEEKWSKEVEKSNKISKKCEILEEKLQESDFLLAKSRDEAKKLQFELDEALEETSHVTRSLSSEKNTLKAKLLELQDQVEAQTLELLNQKNCGKRLEDRDQMISNLHNLKNELENDLKTCQTQLELESKKLQRLREDLVLEKSRRADLIGRIHSLCTTLSLNGANFEKINNDDELIDNIDDIMMNALVAVKRERDDLRIQGNQQIQELHDLKRDIEKLRRSESESLNESDDRVRELTRENMHTKEQVFMLQEKLRELNLELSTKNDEIDMVKASIEELNRNSTASCTSNAEIARLQVSIRNSQIQEDLVKQENTKLRDELQEMQKMSKKRSQNLDELENMHKTLLVDHSRLQQLHNLLTRDYDEAKKESMELRQKVQNIPRQQAVFMNANIRELEAKLSEEISRREQLEKEHKMCRIHCENLRRDITELVQTRDELSLELRRAHDTCHNKNNQIDELKKQLNQKISEVNKLSSKIEALSQLNRTYNEENRNLSRQLEILLTQNKELLQRALHDKDQYHLEMKDFQDQLSALRRHKEKLEDKIMDQYRTMENKKSTPERKQPLVKRAAKALINRRRATSNGGSTTEDSSVYSADERSSPPLAGTNEDVDHLPPTCSSSDDHDVISPDFSAKNPLLRSRNDFMGGSVRSPRRYGNDHDGHIYTSPFLPPRVPIRNSPMTSSLRSRPPPPPYNRSPAHKIEQNSSFFEPIAHSTPNSSILEERRVVGEGEKRELVRDKEERIDKTLSYYENVNLPQNPPDLPENSDLKPNESTIWHEYGCV.

Positions 6–118 constitute a Calponin-homology (CH) domain; sequence ENWSHPLAFW…KLLLLLLGCA (113 aa). 3 coiled-coil regions span residues 141–173, 218–690, and 732–1096; these read ELAA…TDEV, TSEL…ADLI, and KRER…KKST. The disordered stretch occupies residues 166-222; sequence KMKETDEVGGGGGSIEDVDSDDMESSTTSSSNGEIAIKQQDQSFLMSRSTSPTSELR. A compositionally biased stretch (polar residues) spans 204-222; sequence QQDQSFLMSRSTSPTSELR. 2 disordered regions span residues 1112–1236 and 1289–1308; these read INRR…SPAH and NVNL…LKPN. Over residues 1118–1131 the composition is skewed to polar residues; sequence TSNGGSTTEDSSVY.

The protein belongs to the CCDC88 family. As to expression, expressed in AQR and PQR gas-sensing neurons in hermaphrodites (at protein level).

The protein resides in the cytoplasm. It localises to the cytoskeleton. The protein localises to the cilium basal body. Its subcellular location is the microtubule organizing center. It is found in the centrosome. The protein resides in the centriole. Its function is as follows. Scaffolding protein that plays a role in ciliogenesis, cilium positioning and dendrite anchoring in sensory amphid neurons including AWB, AWA, AWC, ADL and ASI, the phasmid neurons PHA and PHB and the gas sensing neurons AQR, PQR, URX and BAG. Its role in cilium positioning may be through regulation of the localization of cell adhesion proteins such as the apical junction protein ajm-1, and the ciliary scaffolding protein Rootletin/che-10. Plays a more prominent role in regulating dendrite morphogenesis in AQR than in PQR neurons. Regulates localization of hmr-1 to the distal AQR dendrite. During embryonic elongation, required for the anchoring of URX and BAG dendrites to the presumptive nose. In Caenorhabditis elegans, this protein is Girdin homolog.